The chain runs to 552 residues: Probable inorganic phosphate transporter 1-10 (552 aa).

At 1 to 22 (MAPIGVLTALDQARTQYYHFKA) the chain is on the cytoplasmic side. A helical membrane pass occupies residues 23-43 (IVIAGMGLFTDSYDLFCIAPV). At 44–68 (MKIVGRVYYSDGGARPGVTPPAVVS) the chain is on the extracellular side. The chain crosses the membrane as a helical span at residues 69-89 (ATVGVALLGAVIGNVVFGALG). At 90 to 96 (DRVGRRR) the chain is on the cytoplasmic side. The helical transmembrane segment at 97–117 (VYGACLLLMVCSSVGSGFSVC) threads the bilayer. The Extracellular portion of the chain corresponds to 118–123 (RTRRCA). Residues 124–144 (LASLCFFRFLLGVGVGGDYPL) traverse the membrane as a helical segment. The Cytoplasmic segment spans residues 145–158 (SATIMSEFANRRTR). A helical transmembrane segment spans residues 159–179 (GAFIAAVFSMQGFGILASSAV). The Extracellular segment spans residues 180–203 (TMAVAAAFDHYTGYPAPLDTPECA). A helical membrane pass occupies residues 204-224 (DLAWRIILMAGAVPAALTYYW). Topologically, residues 225–295 (RMSMPETARY…RRFVRQHGRD (71 aa)) are cytoplasmic. A helical transmembrane segment spans residues 296–316 (LFACAAAWFLLDIPYYSSTLF). Residues 317 to 342 (QSQIYRPLFPAPGLINAFQEAFNVAK) lie on the Extracellular side of the membrane. A helical membrane pass occupies residues 343–363 (FQAVIAVASTIPGYFVAVLLI). Over 364-369 (DRVGRR) the chain is Cytoplasmic. A helical membrane pass occupies residues 370–390 (CLQMAGFLLMAVFLFALAGPY). Topologically, residues 391-397 (DGYWRDH) are extracellular. A helical transmembrane segment spans residues 398–418 (GAHAGYIVLYSLTFFSANLGP). The Cytoplasmic portion of the chain corresponds to 419 to 439 (NTTTFILPAELFPARFRSTCH). The helical transmembrane segment at 440 to 460 (GLSGAAGKLGALVGSIGFLWA) threads the bilayer. At 461–473 (SQQKDGAAAGHLP) the chain is on the extracellular side. The chain crosses the membrane as a helical span at residues 474–494 (GIGMMYALFVLGGICLLGLAL). Residues 495–552 (TYVFTPETMMRSLEENESDRAQTQVGDGGSDTEAAKSPASMASSHLSMSPILPARVSV) lie on the Cytoplasmic side of the membrane. The tract at residues 507-540 (LEENESDRAQTQVGDGGSDTEAAKSPASMASSHL) is disordered.

Belongs to the major facilitator superfamily. Phosphate:H(+) symporter (TC 2.A.1.9) family. As to expression, expressed at low levels in roots.

The protein resides in the membrane. Functionally, high-affinity transporter for external inorganic phosphate. This is Probable inorganic phosphate transporter 1-10 (PHT1-10) from Oryza sativa subsp. japonica (Rice).